The primary structure comprises 92 residues: Small ribosomal subunit protein uS19 (92 aa).

The protein belongs to the universal ribosomal protein uS19 family.

In terms of biological role, protein S19 forms a complex with S13 that binds strongly to the 16S ribosomal RNA. The chain is Small ribosomal subunit protein uS19 from Clostridium botulinum (strain Eklund 17B / Type B).